The following is a 330-amino-acid chain: Ketol-acid reductoisomerase (NADP(+)) (330 aa).

One can recognise a KARI N-terminal Rossmann domain in the interval 2–182; that stretch reads VKVYYDADAN…GCTKAGVFET (181 aa). NADP(+) contacts are provided by residues 25–28, Arg-48, Ser-51, and 83–86; these read YGSQ and DEIQ. Residue His-108 is part of the active site. Residue Gly-134 coordinates NADP(+). A KARI C-terminal knotted domain is found at 183-328; sequence SFREETETDL…ARLREMMPWL (146 aa). Residues Asp-191, Glu-195, Glu-227, and Glu-231 each coordinate Mg(2+). A substrate-binding site is contributed by Ser-252.

It belongs to the ketol-acid reductoisomerase family. Mg(2+) serves as cofactor.

It carries out the reaction (2R)-2,3-dihydroxy-3-methylbutanoate + NADP(+) = (2S)-2-acetolactate + NADPH + H(+). The catalysed reaction is (2R,3R)-2,3-dihydroxy-3-methylpentanoate + NADP(+) = (S)-2-ethyl-2-hydroxy-3-oxobutanoate + NADPH + H(+). Its pathway is amino-acid biosynthesis; L-isoleucine biosynthesis; L-isoleucine from 2-oxobutanoate: step 2/4. It participates in amino-acid biosynthesis; L-valine biosynthesis; L-valine from pyruvate: step 2/4. Involved in the biosynthesis of branched-chain amino acids (BCAA). Catalyzes an alkyl-migration followed by a ketol-acid reduction of (S)-2-acetolactate (S2AL) to yield (R)-2,3-dihydroxy-isovalerate. In the isomerase reaction, S2AL is rearranged via a Mg-dependent methyl migration to produce 3-hydroxy-3-methyl-2-ketobutyrate (HMKB). In the reductase reaction, this 2-ketoacid undergoes a metal-dependent reduction by NADPH to yield (R)-2,3-dihydroxy-isovalerate. The polypeptide is Ketol-acid reductoisomerase (NADP(+)) (Desulforamulus reducens (strain ATCC BAA-1160 / DSM 100696 / MI-1) (Desulfotomaculum reducens)).